Here is a 142-residue protein sequence, read N- to C-terminus: SsrA-binding protein (142 aa).

This sequence belongs to the SmpB family.

It localises to the cytoplasm. Functionally, required for rescue of stalled ribosomes mediated by trans-translation. Binds to transfer-messenger RNA (tmRNA), required for stable association of tmRNA with ribosomes. tmRNA and SmpB together mimic tRNA shape, replacing the anticodon stem-loop with SmpB. tmRNA is encoded by the ssrA gene; the 2 termini fold to resemble tRNA(Ala) and it encodes a 'tag peptide', a short internal open reading frame. During trans-translation Ala-aminoacylated tmRNA acts like a tRNA, entering the A-site of stalled ribosomes, displacing the stalled mRNA. The ribosome then switches to translate the ORF on the tmRNA; the nascent peptide is terminated with the 'tag peptide' encoded by the tmRNA and targeted for degradation. The ribosome is freed to recommence translation, which seems to be the essential function of trans-translation. In Mycoplasma mobile (strain ATCC 43663 / 163K / NCTC 11711) (Mesomycoplasma mobile), this protein is SsrA-binding protein.